A 1295-amino-acid chain; its full sequence is Phosphoribosylformylglycinamidine synthase (1295 aa).

The segment at 302-327 (APFSGAATGSGGEIRDEGATGRGSKP) is disordered. ATP is bound by residues 306-317 (GAATGSGGEIRD) and alanine 677. Positions 678, 717, 721, and 884 each coordinate Mg(2+). Serine 886 lines the ATP pocket. Positions 1042-1295 (MAILREQGVN…MFRNARVYLG (254 aa)) constitute a Glutamine amidotransferase type-1 domain. The active-site Nucleophile is the cysteine 1135. Residues histidine 1260 and glutamate 1262 contribute to the active site.

The protein in the N-terminal section; belongs to the FGAMS family. As to quaternary structure, monomer.

Its subcellular location is the cytoplasm. It carries out the reaction N(2)-formyl-N(1)-(5-phospho-beta-D-ribosyl)glycinamide + L-glutamine + ATP + H2O = 2-formamido-N(1)-(5-O-phospho-beta-D-ribosyl)acetamidine + L-glutamate + ADP + phosphate + H(+). It functions in the pathway purine metabolism; IMP biosynthesis via de novo pathway; 5-amino-1-(5-phospho-D-ribosyl)imidazole from N(2)-formyl-N(1)-(5-phospho-D-ribosyl)glycinamide: step 1/2. In terms of biological role, phosphoribosylformylglycinamidine synthase involved in the purines biosynthetic pathway. Catalyzes the ATP-dependent conversion of formylglycinamide ribonucleotide (FGAR) and glutamine to yield formylglycinamidine ribonucleotide (FGAM) and glutamate. The polypeptide is Phosphoribosylformylglycinamidine synthase (Pseudoalteromonas atlantica (strain T6c / ATCC BAA-1087)).